Reading from the N-terminus, the 119-residue chain is MIIGTGIDIVELERIQSMVEKHPRFVKKILTENEQEVFARLSRRRRLEYIAGRFAAKEAFVKAVGTGISAEYGWHDLEVLSDERGKPVLSVNLDATIHVSISHSQSYAIAQVILERLSS.

Asp-8 and Glu-58 together coordinate Mg(2+).

This sequence belongs to the P-Pant transferase superfamily. AcpS family. It depends on Mg(2+) as a cofactor.

The protein localises to the cytoplasm. The catalysed reaction is apo-[ACP] + CoA = holo-[ACP] + adenosine 3',5'-bisphosphate + H(+). Functionally, transfers the 4'-phosphopantetheine moiety from coenzyme A to a Ser of acyl-carrier-protein. This chain is Holo-[acyl-carrier-protein] synthase, found in Halalkalibacterium halodurans (strain ATCC BAA-125 / DSM 18197 / FERM 7344 / JCM 9153 / C-125) (Bacillus halodurans).